An 812-amino-acid polypeptide reads, in one-letter code: Chromosome alignment-maintaining phosphoprotein 1 (812 aa).

Methionine 1 bears the N-acetylmethionine mark. The span at 86–105 shows a compositional bias: basic and acidic residues; sequence ASPDKWNDKPKNQLNKETDP. Disordered regions lie at residues 86-124 and 136-546; these read ASPDKWNDKPKNQLNKETDPVKSPPLPEHQKIPCNSAEP and KLGS…PEAR. Serine 87, serine 108, serine 173, serine 184, serine 204, serine 214, and serine 217 each carry phosphoserine. The span at 202-213 shows a compositional bias: pro residues; the sequence is VPSPEPQKPAPV. The span at 220-233 shows a compositional bias: polar residues; that stretch reads ATLSNPKPQKQSHF. Phosphoserine is present on residues serine 244, serine 247, serine 253, serine 264, serine 275, serine 282, serine 286, serine 297, serine 308, serine 319, serine 344, serine 355, serine 376, serine 382, and serine 386. Residues 271 to 490 are mediates interaction with MAD2L2; that stretch reads ARTTSPEPRK…KSSFFIEPQK (220 aa). Over residues 284-297 the composition is skewed to pro residues; that stretch reads SESPEPWKPFPAVS. Residues 336 to 361 show a composition bias toward pro residues; it reads PAKPAPSVSPGPWKPIPSVSPGPWKP. Residues 363 to 392 are compositionally biased toward low complexity; that stretch reads PSVSSASWKSSSVSPSSWKSPPASPESWKS. A Phosphothreonine modification is found at threonine 403. Residues serine 405, serine 416, serine 427, serine 432, serine 436, serine 443, serine 445, and serine 452 each carry the phosphoserine modification. The segment at 451 to 590 is mediates localization to the spindle and the kinetochore and is required for the attachment of spindle microtubules to the kinetochore; it reads LSPDQRKTSP…ELQIDAIDDQ (140 aa). A Phosphothreonine modification is found at threonine 458. Serine 459, serine 462, serine 472, and serine 476 each carry phosphoserine. Lysine 490 is modified (N6-acetyllysine; alternate). Lysine 490 is covalently cross-linked (Glycyl lysine isopeptide (Lys-Gly) (interchain with G-Cter in SUMO2); alternate). Positions 499–512 are enriched in low complexity; the sequence is PGPSGPSESPKAAS. A phosphoserine mark is found at serine 507, serine 512, and serine 542. Residue lysine 565 forms a Glycyl lysine isopeptide (Lys-Gly) (interchain with G-Cter in SUMO2) linkage. Phosphoserine occurs at positions 572 and 603. The mediates localization to the chromosome and the spindle and negatively regulates chromosome alignment stretch occupies residues 591 to 812; that stretch reads KCDILVQEEL…LEPPLEEQQI (222 aa). A Glycyl lysine isopeptide (Lys-Gly) (interchain with G-Cter in SUMO2) cross-link involves residue lysine 606. Phosphoserine is present on residues serine 615, serine 626, serine 627, and serine 632. Lysine 638 participates in a covalent cross-link: Glycyl lysine isopeptide (Lys-Gly) (interchain with G-Cter in SUMO2). 3 positions are modified to phosphoserine: serine 651, serine 652, and serine 653. Lysine 670 is covalently cross-linked (Glycyl lysine isopeptide (Lys-Gly) (interchain with G-Cter in SUMO2)). At serine 675 the chain carries Phosphoserine. Lysine 689 is covalently cross-linked (Glycyl lysine isopeptide (Lys-Gly) (interchain with G-Cter in SUMO2)). Serine 736 is modified (phosphoserine). The segment at 738 to 760 adopts a C2H2-type zinc-finger fold; it reads YKCTICGKAFLLESLLKNHVAAH.

As to quaternary structure, interacts with MAD2L2. Interacts with POGZ, CBX1, CBX3 and CBX5. Post-translationally, phosphorylated by CDK1. Mitotic phosphorylation is required for the attachment of spindle microtubules to the kinetochore.

The protein localises to the nucleus. The protein resides in the chromosome. It is found in the centromere. Its subcellular location is the kinetochore. It localises to the cytoplasm. The protein localises to the cytoskeleton. The protein resides in the spindle. In terms of biological role, required for proper alignment of chromosomes at metaphase and their accurate segregation during mitosis. Involved in the maintenance of spindle microtubules attachment to the kinetochore during sister chromatid biorientation. May recruit CENPE and CENPF to the kinetochore. The sequence is that of Chromosome alignment-maintaining phosphoprotein 1 (CHAMP1) from Homo sapiens (Human).